We begin with the raw amino-acid sequence, 75 residues long: Small ribosomal subunit protein bS16 (75 aa).

The protein belongs to the bacterial ribosomal protein bS16 family.

This Aliarcobacter butzleri (strain RM4018) (Arcobacter butzleri) protein is Small ribosomal subunit protein bS16.